The sequence spans 319 residues: Acetyl-coenzyme A carboxylase carboxyl transferase subunit alpha (319 aa).

The CoA carboxyltransferase C-terminal domain maps to 35-296 (DLEKEIKQLE…KQRLLEQLKE (262 aa)).

It belongs to the AccA family. Acetyl-CoA carboxylase is a heterohexamer composed of biotin carboxyl carrier protein (AccB), biotin carboxylase (AccC) and two subunits each of ACCase subunit alpha (AccA) and ACCase subunit beta (AccD).

It is found in the cytoplasm. The enzyme catalyses N(6)-carboxybiotinyl-L-lysyl-[protein] + acetyl-CoA = N(6)-biotinyl-L-lysyl-[protein] + malonyl-CoA. Its pathway is lipid metabolism; malonyl-CoA biosynthesis; malonyl-CoA from acetyl-CoA: step 1/1. Functionally, component of the acetyl coenzyme A carboxylase (ACC) complex. First, biotin carboxylase catalyzes the carboxylation of biotin on its carrier protein (BCCP) and then the CO(2) group is transferred by the carboxyltransferase to acetyl-CoA to form malonyl-CoA. The polypeptide is Acetyl-coenzyme A carboxylase carboxyl transferase subunit alpha (Aliivibrio fischeri (strain MJ11) (Vibrio fischeri)).